The sequence spans 647 residues: A-type voltage-gated potassium channel KCND1 (647 aa).

Topologically, residues 1 to 183 (MAAGVATWLP…RAFENPHTST (183 aa)) are cytoplasmic. The segment at 2–20 (AAGVATWLPFARAAAVGWL) is interaction with KCNIP1, KCNIP2, and other family members. Zn(2+) is bound by residues H104, C131, and C132. The segment at 144–164 (AQRLAEDEEAEQTGDGPALPA) is disordered. A helical transmembrane segment spans residues 184-205 (AALVFYYVTGFFIAVSVIANVV). The Extracellular portion of the chain corresponds to 206–230 (ETIPCRGPARRPPREQPCGDRFPLA). The chain crosses the membrane as a helical span at residues 231 to 252 (FFCMDTACVLIFTGEYLLRLFA). Over 253 to 263 (APSRCRFLRSV) the chain is Cytoplasmic. A helical membrane pass occupies residues 264-284 (MSLIDVVAILPYYIGLLVPKN). At 285-287 (EDV) the chain is on the extracellular side. The helical; Voltage-sensor transmembrane segment at 288–308 (SGAFVTLRVFRVFRIFKFSRH) threads the bilayer. Residues 309–323 (SQGLRILGYTLKSCA) are Cytoplasmic-facing. The tract at residues 310-323 (QGLRILGYTLKSCA) is S4-S5 linker. The helical transmembrane segment at 324 to 345 (SELGFLLFSLTMAIIIFATVMF) threads the bilayer. Residues 346–359 (YAEKGTSKTNFTSI) are Extracellular-facing. The segment at residues 360 to 371 (PAAFWYTIVTMT) is an intramembrane region (helical). Residues 372–377 (TLGYGD) carry the Selectivity filter motif. An intramembrane segment occupies 372–379 (TLGYGDMV). Residues 380–386 (PSTIAGK) are Extracellular-facing. The chain crosses the membrane as a helical span at residues 387–415 (IFGSICSLSGVLVIALPVPVIVSNFSRIY). Over 416 to 647 (HQNQRADKRR…LPETVKISSL (232 aa)) the chain is Cytoplasmic. A required for dendritic targeting region spans residues 474–489 (FEQQHHHLLHCLEKTT). A compositionally biased stretch (low complexity) spans 510-520 (GRTSRSTSVSS). The disordered stretch occupies residues 510-531 (GRTSRSTSVSSQPVGPSSLLSS). Over residues 521-530 (QPVGPSSLLS) the composition is skewed to polar residues. S555 is subject to Phosphoserine. 2 disordered regions span residues 564–584 (GLRR…PHDS) and 601–634 (IPTP…RLGT).

It belongs to the potassium channel family. D (Shal) (TC 1.A.1.2) subfamily. Kv4.1/KCND1 sub-subfamily. As to quaternary structure, component of heteromultimeric potassium channels. Identified in potassium channel complexes containing KCND1, KCND2, KCND3, KCNIP1, KCNIP2, KCNIP3, KCNIP4, DPP6 and DPP10. In terms of tissue distribution, detected in carotid body chemoreceptor cells and in frontal cortex.

It is found in the cell membrane. It carries out the reaction K(+)(in) = K(+)(out). Functionally, A-type voltage-gated potassium channel that mediates transmembrane potassium transport in excitable membranes in the brain. Mediates A-type current I(SA) in suprachiasmatic nucleus (SCN) neurons. Exhibits a low-threshold A-type current with a hyperpolarized steady-state inactivation midpoint and the recovery process was steeply voltage-dependent, with recovery being markedly faster at more negative potentials. May regulates repetitive firing rates in the suprachiasmatic nucleus (SCN) neurons and circadian rhythms in neuronal excitability and behavior. Contributes to the regulation of the circadian rhythm of action potential firing in suprachiasmatic nucleus neurons, which regulates the circadian rhythm of locomotor activity. The regulatory subunit KCNIP1 modulates the kinetics of channel inactivation, increases the current amplitudes and accelerates recovery from inactivation, shifts activation in a depolarizing direction. The regulatory subunit DPP10 decreases the voltage sensitivity of the inactivation channel gating. The protein is A-type voltage-gated potassium channel KCND1 of Oryctolagus cuniculus (Rabbit).